We begin with the raw amino-acid sequence, 406 residues long: Phosphopentomutase (406 aa).

The Mn(2+) site is built by Asp-10, Asp-305, His-310, Asp-346, His-347, and His-358.

The protein belongs to the phosphopentomutase family. It depends on Mn(2+) as a cofactor.

It is found in the cytoplasm. The enzyme catalyses 2-deoxy-alpha-D-ribose 1-phosphate = 2-deoxy-D-ribose 5-phosphate. It carries out the reaction alpha-D-ribose 1-phosphate = D-ribose 5-phosphate. It participates in carbohydrate degradation; 2-deoxy-D-ribose 1-phosphate degradation; D-glyceraldehyde 3-phosphate and acetaldehyde from 2-deoxy-alpha-D-ribose 1-phosphate: step 1/2. Functionally, isomerase that catalyzes the conversion of deoxy-ribose 1-phosphate (dRib-1-P) and ribose 1-phosphate (Rib-1-P) to deoxy-ribose 5-phosphate (dRib-5-P) and ribose 5-phosphate (Rib-5-P), respectively. This is Phosphopentomutase from Rhizobium meliloti (strain 1021) (Ensifer meliloti).